The primary structure comprises 433 residues: MNRDTSPDLHYLSGFGNEFASEALPGALPVGQNSPQKAPYGLYAELLSGTAFTMARSELRRTWLYRIRPSALHPRFERLARQPLSGPLGGINPNRLRWSPQPIPAEPTDFIEGWLPMVANAAAEKPAGVSIYIYRANRSMERVFFNADGELLLVPEQGRLRIATELGVMEVEPLEIAVIPRGMKFRVELLDGQARGYIAENHGAPLRIPDLGPIGSNGLANPRDFLTPVAHYEEAEAPVQLVQKFLGEHWACELQHSPLDVVAWHGSNVPYKYDLRRFNTIGTVSFDHPDPSIFTVLTSPTSVHGLANMDFVIFPPRWMVAENTFRPPWFHRNLMNEFMGLINGAYDAKAEGFLPGGASLHGVMSAHGPDAETCEKAIAADLAPHKIDNTMAFMFETSQVLRPSLQALECPQLQADYDSCWATLPSTFNPNRR.

Histidine 288 functions as the Proton acceptor in the catalytic mechanism. Fe cation is bound by residues histidine 331 and glutamate 337. Positions 346 and 367 each coordinate homogentisate. Histidine 367 contributes to the Fe cation binding site.

It belongs to the homogentisate dioxygenase family. In terms of assembly, hexamer; dimer of trimers. Fe cation serves as cofactor.

The enzyme catalyses homogentisate + O2 = 4-maleylacetoacetate + H(+). It functions in the pathway amino-acid degradation; L-phenylalanine degradation; acetoacetate and fumarate from L-phenylalanine: step 4/6. Its function is as follows. Involved in the catabolism of homogentisate (2,5-dihydroxyphenylacetate or 2,5-OH-PhAc), a central intermediate in the degradation of phenylalanine and tyrosine. Catalyzes the oxidative ring cleavage of the aromatic ring of homogentisate to yield maleylacetoacetate. This chain is Homogentisate 1,2-dioxygenase, found in Pseudomonas putida (strain GB-1).